We begin with the raw amino-acid sequence, 163 residues long: Nucleotide-binding protein BBR47_25280 (163 aa).

Belongs to the YajQ family.

In terms of biological role, nucleotide-binding protein. The protein is Nucleotide-binding protein BBR47_25280 of Brevibacillus brevis (strain 47 / JCM 6285 / NBRC 100599).